A 368-amino-acid chain; its full sequence is Isopentenyl-diphosphate delta-isomerase (368 aa).

Arginine 7–lysine 8 contacts substrate. Residues threonine 65, glycine 66 to threonine 68, serine 96, and asparagine 125 each bind FMN. A substrate-binding site is contributed by serine 96–arginine 98. Glutamine 160 contacts substrate. Residue glutamate 161 coordinates Mg(2+). Residues lysine 193, serine 218, threonine 223, glycine 275–arginine 277, and alanine 296–leucine 297 each bind FMN.

Belongs to the IPP isomerase type 2 family. In terms of assembly, homooctamer. Dimer of tetramers. Requires FMN as cofactor. It depends on NADPH as a cofactor. The cofactor is Mg(2+).

It is found in the cytoplasm. It carries out the reaction isopentenyl diphosphate = dimethylallyl diphosphate. Involved in the biosynthesis of isoprenoids. Catalyzes the 1,3-allylic rearrangement of the homoallylic substrate isopentenyl (IPP) to its allylic isomer, dimethylallyl diphosphate (DMAPP). The sequence is that of Isopentenyl-diphosphate delta-isomerase from Saccharolobus islandicus (strain M.16.27) (Sulfolobus islandicus).